The primary structure comprises 46 residues: uncharacterized protein (46 aa).

This is an uncharacterized protein from Saccharomyces cerevisiae (strain ATCC 204508 / S288c) (Baker's yeast).